We begin with the raw amino-acid sequence, 257 residues long: Electron transfer flavoprotein subunit beta (257 aa).

It belongs to the ETF beta-subunit/FixA family. Heterodimer of an alpha and a beta subunit. It depends on FAD as a cofactor. AMP is required as a cofactor.

Its function is as follows. The electron transfer flavoprotein serves as a specific electron acceptor for other dehydrogenases. It transfers the electrons to the main respiratory chain via ETF-ubiquinone oxidoreductase (ETF dehydrogenase). This is Electron transfer flavoprotein subunit beta (etfB) from Bacillus subtilis (strain 168).